The chain runs to 279 residues: Thymidylate synthase (279 aa).

R29 lines the dUMP pocket. H59 is a binding site for (6R)-5,10-methylene-5,6,7,8-tetrahydrofolate. 134 to 135 (RR) lines the dUMP pocket. The Nucleophile role is filled by C154. DUMP-binding positions include 181 to 184 (RSAD), N192, and 222 to 224 (HIY). D184 contributes to the (6R)-5,10-methylene-5,6,7,8-tetrahydrofolate binding site. Residue A278 participates in (6R)-5,10-methylene-5,6,7,8-tetrahydrofolate binding.

The protein belongs to the thymidylate synthase family. Bacterial-type ThyA subfamily. Homodimer.

Its subcellular location is the cytoplasm. The catalysed reaction is dUMP + (6R)-5,10-methylene-5,6,7,8-tetrahydrofolate = 7,8-dihydrofolate + dTMP. It participates in pyrimidine metabolism; dTTP biosynthesis. Its function is as follows. Catalyzes the reductive methylation of 2'-deoxyuridine-5'-monophosphate (dUMP) to 2'-deoxythymidine-5'-monophosphate (dTMP) while utilizing 5,10-methylenetetrahydrofolate (mTHF) as the methyl donor and reductant in the reaction, yielding dihydrofolate (DHF) as a by-product. This enzymatic reaction provides an intracellular de novo source of dTMP, an essential precursor for DNA biosynthesis. This is Thymidylate synthase from Paracidovorax citrulli (strain AAC00-1) (Acidovorax citrulli).